The sequence spans 238 residues: Ribosomal RNA small subunit methyltransferase G (238 aa).

Residues Gly-77, Phe-82, 128–129 (AE), and Arg-147 contribute to the S-adenosyl-L-methionine site.

Belongs to the methyltransferase superfamily. RNA methyltransferase RsmG family.

It localises to the cytoplasm. Its function is as follows. Specifically methylates the N7 position of guanine in position 535 of 16S rRNA. The chain is Ribosomal RNA small subunit methyltransferase G from Listeria welshimeri serovar 6b (strain ATCC 35897 / DSM 20650 / CCUG 15529 / CIP 8149 / NCTC 11857 / SLCC 5334 / V8).